A 603-amino-acid chain; its full sequence is Carbon catabolite repressor protein 4 homolog 2 (603 aa).

Residues 115–136 (ENNANEDDDLNRNNSAGSGSLA) are disordered. Over residues 126–136 (RNNSAGSGSLA) the composition is skewed to low complexity. E302 contacts Mg(2+).

The protein belongs to the CCR4/nocturin family. In terms of assembly, component of the CCR4-NOT complex, at least composed of CRR4 and CAF1 proteins. The cofactor is Mg(2+).

The protein localises to the nucleus. The protein resides in the cytoplasm. The enzyme catalyses Exonucleolytic cleavage of poly(A) to 5'-AMP.. Acts as a catalytic component of the CCR4-NOT core complex, which in the nucleus seems to be a general transcription factor, and in the cytoplasm the major mRNA deadenylase involved in mRNA turnover. The sequence is that of Carbon catabolite repressor protein 4 homolog 2 (CCR4-2) from Arabidopsis thaliana (Mouse-ear cress).